A 416-amino-acid chain; its full sequence is 4-hydroxy-3-methylbut-2-en-1-yl diphosphate synthase (flavodoxin) (416 aa).

Residues Cys-304, Cys-307, Cys-350, and Glu-357 each contribute to the [4Fe-4S] cluster site.

The protein belongs to the IspG family. [4Fe-4S] cluster is required as a cofactor.

The enzyme catalyses (2E)-4-hydroxy-3-methylbut-2-enyl diphosphate + oxidized [flavodoxin] + H2O + 2 H(+) = 2-C-methyl-D-erythritol 2,4-cyclic diphosphate + reduced [flavodoxin]. Its pathway is isoprenoid biosynthesis; isopentenyl diphosphate biosynthesis via DXP pathway; isopentenyl diphosphate from 1-deoxy-D-xylulose 5-phosphate: step 5/6. Functionally, converts 2C-methyl-D-erythritol 2,4-cyclodiphosphate (ME-2,4cPP) into 1-hydroxy-2-methyl-2-(E)-butenyl 4-diphosphate. This chain is 4-hydroxy-3-methylbut-2-en-1-yl diphosphate synthase (flavodoxin), found in Rhizobium leguminosarum bv. trifolii (strain WSM2304).